A 612-amino-acid polypeptide reads, in one-letter code: Breast cancer type 1 susceptibility protein homolog (612 aa).

The RING-type zinc-finger motif lies at 21–61 (CGICCSTYKDPILSTCFHIFCRSCINACFERKRKVQCPICR). The disordered stretch occupies residues 140-173 (RRKRPSRPQPPSAFAEEPAEPVEPPEPATKQPVE). BRCT domains follow at residues 415-477 (RFAE…DYTI) and 505-603 (EHGK…PYKA).

In terms of assembly, heterodimer (via RING-type zinc finger) with brd-1 to form the core CeBCD complex. Brc-1-brd-1 heterodimer-containing CeBCD complexes bound to chromatin are activated as an E3-ubiquitin ligase in response to DNA damage. The heterodimer interacts with the recombinase rad-51 following ionizing irradiation; the interaction is direct. The heterodimer interacts the E2-ubiquitin-conjugating enzyme let-70 following ionizing irradiation. The heterodimer interacts with the pro-crossover proteins msh-5 and syp-3. In terms of processing, phosphorylation of CeBCD complexes is required for E3 ubiquitin-protein ligase activity.

Its subcellular location is the nucleus. It is found in the chromosome. The protein resides in the cytoplasm. The enzyme catalyses S-ubiquitinyl-[E2 ubiquitin-conjugating enzyme]-L-cysteine + [acceptor protein]-L-lysine = [E2 ubiquitin-conjugating enzyme]-L-cysteine + N(6)-ubiquitinyl-[acceptor protein]-L-lysine.. The protein operates within protein modification; protein ubiquitination. Its activity is regulated as follows. E3 ubiquitin-protein ligase activity of CeBCD complexes occurs at DNA damage sites. Following DNA damage, E3 ubiquitin-protein ligase activity is reduced by caffeine treatment (inhibitor of ATM and ATK kinase activity). Functionally, E3 ubiquitin-protein ligase that specifically mediates the formation of polyubiquitin chains and plays a central role in DNA repair. Plays a role in triggering cellular responses at damage sites in response to DNA damage that may be induced by UV and ionizing radiation for example. Functions in double-strand break repair, and is required for homologous recombination between sister chromatids in meiotic and mitotic cells. In particular, protects against chromosome non-disjunction and nuclear fragmentation during meiotic double-strand break repair to ensure sister chromatid recombination and aid chromosome stability. Required for normal cell cycle progression. Along with brap-2 modulates the expression of cell cycle arrest protein cki-1 in response to increased levels of reactive oxygen species. Constituent of the CeBCD complex that possesses E3 ubiquitin-protein ligase activity. When bound to chromatin, the brc-1-brd-1 heterodimer within the CeBCD complex is inactive during normal conditions, but in response to DNA damage, the brc-1-brd-1 heterodimer associates with other proteins such as the recombinase rad-51 or the E2-ubiquitin-conjugating enzyme let-70, which activate the CeBCD complex as an E3-ubiquitin ligase. Moreover, association between the brc-1-brd-1 heterodimer and rad-51 and let-70, probably requires DNA checkpoint proteins such as atl-1 and mre-11 in order to induce ubiquitination at DNA damage sites. To this end, the brc-1-brd-1 heterodimer coordinates a diverse range of cellular pathways such as DNA damage repair, ubiquitination and transcriptional regulation to maintain genomic stability. This chain is Breast cancer type 1 susceptibility protein homolog, found in Caenorhabditis elegans.